The chain runs to 642 residues: MPIITLPDGSQRQFAHAVSVMDVAADIGPGLAKACIAGRVNGELVDACELIEADASLAIITAKDEEGLDILRHSCAHLLGHAIKQLWPQTKMAIGPVIDNGFYYDIDLDRTLTDEDLAALEERMLALAAKDYDVIKKKVSWQEARDVFEARGETYKVEILDQNIARDDQPGLYHHEEYIDMCRGPHVPNMRHCHHFKLQKMSGAYWRGDSNNKMLQRIYGTAWADKKQLKSYLQRLEEAAKRDHRKIGKQLDLYHMQEEAPGMVFWHNDGWTIFRELETFIRGKLKEYDYQEVKGPFMMDRVLWERSGHWEKYAQAMFTTQSENREYAIKPMNCPGHVQIFNQGLKSYRDLPLRMAEFGSCHRNEPSGSLHGLMRVRGFTQDDAHIFCTEEQIMEEVSACIRMVYDVYGTFGFENIVVKLSTRPEQRIGSDEAWDRAEAALAEALVLNGLKYDLQPGEGAFYGPKIEFTLHDCLDRAWQCGTVQLDFALPGRLGATYVGEDNERHVPVMIHRAILGSLERFIGILTEEYAGLFPTWLAPTQAVVMNITDNQADYAVKVAKALNDAGLRAKADLRNEKIGFKIREHTLKRVPFMLVCGDKEVEAGKIAVRTRKGADLGTYPVEELIALLTQEVQTRGQKKVEE.

A TGS domain is found at 1–61 (MPIITLPDGS…EADASLAIIT (61 aa)). Residues 243–534 (DHRKIGKQLD…LTEEYAGLFP (292 aa)) are catalytic. 3 residues coordinate Zn(2+): C334, H385, and H511.

It belongs to the class-II aminoacyl-tRNA synthetase family. In terms of assembly, homodimer. The cofactor is Zn(2+).

The protein resides in the cytoplasm. The enzyme catalyses tRNA(Thr) + L-threonine + ATP = L-threonyl-tRNA(Thr) + AMP + diphosphate + H(+). In terms of biological role, catalyzes the attachment of threonine to tRNA(Thr) in a two-step reaction: L-threonine is first activated by ATP to form Thr-AMP and then transferred to the acceptor end of tRNA(Thr). Also edits incorrectly charged L-seryl-tRNA(Thr). This chain is Threonine--tRNA ligase, found in Aeromonas hydrophila subsp. hydrophila (strain ATCC 7966 / DSM 30187 / BCRC 13018 / CCUG 14551 / JCM 1027 / KCTC 2358 / NCIMB 9240 / NCTC 8049).